The primary structure comprises 319 residues: Aliphatic sulfonates import ATP-binding protein SsuB 1 (319 aa).

An ABC transporter domain is found at valine 63–leucine 282. Residue glycine 95–serine 102 coordinates ATP.

It belongs to the ABC transporter superfamily. Aliphatic sulfonates importer (TC 3.A.1.17.2) family. In terms of assembly, the complex is composed of two ATP-binding proteins (SsuB), two transmembrane proteins (SsuC) and a solute-binding protein (SsuA).

It is found in the cell inner membrane. It carries out the reaction ATP + H2O + aliphatic sulfonate-[sulfonate-binding protein]Side 1 = ADP + phosphate + aliphatic sulfonateSide 2 + [sulfonate-binding protein]Side 1.. Its function is as follows. Part of the ABC transporter complex SsuABC involved in aliphatic sulfonates import. Responsible for energy coupling to the transport system. This is Aliphatic sulfonates import ATP-binding protein SsuB 1 from Burkholderia lata (strain ATCC 17760 / DSM 23089 / LMG 22485 / NCIMB 9086 / R18194 / 383).